A 449-amino-acid chain; its full sequence is DNA-directed RNA polymerase subunit Rpo1C (449 aa).

The unknown stretch occupies residues 1–68 (MQDVIKKIED…EGEELLKAVE (68 aa)). Positions 69–449 (DEYLRILKVR…TGSVSVIMKK (381 aa)) are DNA-directed RNA polymerase subunit Rpo1C.

It belongs to the RNA polymerase beta' chain family. Part of the RNA polymerase complex.

It is found in the cytoplasm. It carries out the reaction RNA(n) + a ribonucleoside 5'-triphosphate = RNA(n+1) + diphosphate. In terms of biological role, DNA-dependent RNA polymerase (RNAP) catalyzes the transcription of DNA into RNA using the four ribonucleoside triphosphates as substrates. Forms part of the jaw domain. This is DNA-directed RNA polymerase subunit Rpo1C from Methanothermobacter thermautotrophicus (strain Winter) (Methanobacterium thermoautotrophicum).